A 211-amino-acid chain; its full sequence is Protein-L-isoaspartate O-methyltransferase (211 aa).

Ser60 is an active-site residue.

The protein belongs to the methyltransferase superfamily. L-isoaspartyl/D-aspartyl protein methyltransferase family.

The protein resides in the cytoplasm. The catalysed reaction is [protein]-L-isoaspartate + S-adenosyl-L-methionine = [protein]-L-isoaspartate alpha-methyl ester + S-adenosyl-L-homocysteine. Functionally, catalyzes the methyl esterification of L-isoaspartyl residues in peptides and proteins that result from spontaneous decomposition of normal L-aspartyl and L-asparaginyl residues. It plays a role in the repair and/or degradation of damaged proteins. This is Protein-L-isoaspartate O-methyltransferase from Pseudomonas savastanoi pv. phaseolicola (strain 1448A / Race 6) (Pseudomonas syringae pv. phaseolicola (strain 1448A / Race 6)).